The sequence spans 1218 residues: DNA-directed RNA polymerase subunit beta' (1218 aa).

Zn(2+)-binding residues include Cys60, Cys62, Cys75, and Cys78. Mg(2+)-binding residues include Asp455, Asp457, and Asp459. Cys824, Cys897, Cys904, and Cys907 together coordinate Zn(2+). A disordered region spans residues 1195–1218 (ENEAQSDKSQDEQEIGEITVDMGE).

Belongs to the RNA polymerase beta' chain family. As to quaternary structure, the RNAP catalytic core consists of 2 alpha, 1 beta, 1 beta' and 1 omega subunit. When a sigma factor is associated with the core the holoenzyme is formed, which can initiate transcription. It depends on Mg(2+) as a cofactor. Requires Zn(2+) as cofactor.

The catalysed reaction is RNA(n) + a ribonucleoside 5'-triphosphate = RNA(n+1) + diphosphate. Its function is as follows. DNA-dependent RNA polymerase catalyzes the transcription of DNA into RNA using the four ribonucleoside triphosphates as substrates. In Natranaerobius thermophilus (strain ATCC BAA-1301 / DSM 18059 / JW/NM-WN-LF), this protein is DNA-directed RNA polymerase subunit beta'.